We begin with the raw amino-acid sequence, 277 residues long: Inositol monophosphatase 1 (277 aa).

The Mg(2+) site is built by Glu70, Asp90, Ile92, and Asp93. Position 70 (Glu70) interacts with substrate. Residue 92 to 95 (IDGT) coordinates substrate. At Thr168 the chain carries Phosphothreonine. Substrate contacts are provided by residues 194 to 196 (GTA), Glu213, and Asp220. Asp220 is a Mg(2+) binding site.

This sequence belongs to the inositol monophosphatase superfamily. As to quaternary structure, homodimer. Mg(2+) serves as cofactor. The N-terminus is blocked.

The protein resides in the cytoplasm. It catalyses the reaction a myo-inositol phosphate + H2O = myo-inositol + phosphate. It carries out the reaction 1D-myo-inositol 1-phosphate + H2O = myo-inositol + phosphate. The enzyme catalyses 1D-myo-inositol 2-phosphate + H2O = myo-inositol + phosphate. The catalysed reaction is 1D-myo-inositol 3-phosphate + H2O = myo-inositol + phosphate. It catalyses the reaction 1D-myo-inositol 4-phosphate + H2O = myo-inositol + phosphate. It carries out the reaction 1D-myo-inositol 5-phosphate + H2O = myo-inositol + phosphate. The enzyme catalyses 1D-myo-inositol 6-phosphate + H2O = myo-inositol + phosphate. The catalysed reaction is scyllo-inositol 1-phosphate + H2O = scyllo-inositol + phosphate. It catalyses the reaction alpha-D-galactose 1-phosphate + H2O = D-galactose + phosphate. It carries out the reaction alpha-D-glucose 1-phosphate + H2O = D-glucose + phosphate. The enzyme catalyses D-glucose 6-phosphate + H2O = D-glucose + phosphate. The catalysed reaction is beta-D-fructose 1-phosphate + H2O = D-fructose + phosphate. It catalyses the reaction glycerol 2-phosphate + H2O = glycerol + phosphate. It carries out the reaction adenosine 2'-phosphate + H2O = adenosine + phosphate. It participates in polyol metabolism; myo-inositol biosynthesis; myo-inositol from D-glucose 6-phosphate: step 2/2. Activity with myo-inositol monophosphate and D-galactose 1-phosphate is inhibited by Li(+), Ca(2+) and Mn(2+), but also by Mg(2+) at concentrations above 3 mM. Phosphatase involved in the dephosphorylation of myo-inositol monophosphate to generate myo-inositol. Is also able to dephosphorylate scyllo-inositol-phosphate, myo-inositol 1,4-diphosphate, scyllo-inositol-1,3-diphosphate and scyllo-inositol-1,4-diphosphate. Also dephosphorylates in vitro other sugar-phosphates including D-galactose-1-phosphate, glucose-1-phosphate, glucose-6-phosphate, fructose-1-phosphate, beta-glycerophosphate and 2'-AMP. Responsible for the provision of inositol required for synthesis of phosphatidylinositol and polyphosphoinositides, and involved in maintaining normal brain function. Has been implicated as the pharmacological target for lithium Li(+) action in brain. Is equally active with myo-inositol monophosphate and D-galactose 1-phosphate. This chain is Inositol monophosphatase 1 (IMPA1), found in Bos taurus (Bovine).